We begin with the raw amino-acid sequence, 408 residues long: Histidine--tRNA ligase (408 aa).

This sequence belongs to the class-II aminoacyl-tRNA synthetase family. As to quaternary structure, homodimer.

The protein resides in the cytoplasm. The catalysed reaction is tRNA(His) + L-histidine + ATP = L-histidyl-tRNA(His) + AMP + diphosphate + H(+). In Wolbachia pipientis wMel, this protein is Histidine--tRNA ligase.